Consider the following 837-residue polypeptide: Tuftelin-interacting protein 11 (837 aa).

Basic and acidic residues predominate over residues 1 to 13 (MSLSHLYRDGEGH). Disordered stretches follow at residues 1-31 (MSLS…DWDL), 54-73 (WAER…RARD), and 85-136 (LKKG…AGGT). Residues 1–50 (MSLSHLYRDGEGHMDDDEDERENFEITDWDLQNEFNPNRQRHWQTKEEAT) are required for interaction with DHX15. Ser2 is modified (phosphoserine). Over residues 14–28 (MDDDEDERENFEITD) the composition is skewed to acidic residues. Over residues 54–64 (WAERDSDEERP) the composition is skewed to basic and acidic residues. Phosphoserine occurs at positions 59 and 98. Residues 91–102 (EEAELEDSDDEE) show a composition bias toward acidic residues. Basic and acidic residues predominate over residues 103 to 116 (KPVKQDEFPKDFGP). Ser144 is modified (phosphoserine). The G-patch domain maps to 149 to 195 (TKGIGQKLLQKMGYVPGRGLGKNAQGIINPIEAKQRKGKGAVGAYGS). Disordered regions lie at residues 183 to 236 (QRKG…KKKP) and 287 to 313 (HKHS…ARAP). Ser210 is subject to Phosphoserine. Positions 217-231 (EFQKELSQWRKDPSG) are enriched in basic and acidic residues. The short motif at 700-705 (VKDKFN) is the Nuclear localization signal element. Residues 710-734 (IMNRAVSSNVGAYMQPGAREHIAYL) form a required for nuclear speckle localization region.

This sequence belongs to the TFP11/STIP family. As to quaternary structure, identified in the spliceosome C complex. Found in the Intron Large (IL) complex, a post-mRNA release spliceosomal complex containing the excised intron, U2, U5 and U6 snRNPs, and splicing factors. Interacts with TUFT1. Interacts with DHX15; indicative for a recruitment of DHX15 to the IL complex. Interacts with GCFC2.

The protein localises to the cytoplasm. It localises to the nucleus. Functionally, involved in pre-mRNA splicing, specifically in spliceosome disassembly during late-stage splicing events. Intron turnover seems to proceed through reactions in two lariat-intron associated complexes termed Intron Large (IL) and Intron Small (IS). In cooperation with DHX15 seems to mediate the transition of the U2, U5 and U6 snRNP-containing IL complex to the snRNP-free IS complex leading to efficient debranching and turnover of excised introns. May play a role in the differentiation of ameloblasts and odontoblasts or in the forming of the enamel extracellular matrix. The sequence is that of Tuftelin-interacting protein 11 (TFIP11) from Bos taurus (Bovine).